A 147-amino-acid chain; its full sequence is Large ribosomal subunit protein bL9 (147 aa).

The protein belongs to the bacterial ribosomal protein bL9 family.

In terms of biological role, binds to the 23S rRNA. This chain is Large ribosomal subunit protein bL9, found in Clostridium botulinum (strain 657 / Type Ba4).